The sequence spans 282 residues: sn-glycerol-3-phosphate transport system permease protein UgpE (282 aa).

The next 6 membrane-spanning stretches (helical) occupy residues 14 to 34 (LILILGIIIVAFPIYYTFVAS), 86 to 106 (MAIAVGKIIISFMSAFAIVFF), 112 to 132 (MFFFWMIFITLMLPVEVRILP), 146 to 168 (YAGLTLPLMASATATFLFRQFFL), 201 to 221 (IAALFVILFIYGWTQYLWPLL), and 248 to 268 (WNYVMVTAILAIIPLILVVVL). Residues 78–269 (LWNSFVVAMA…IPLILVVVLM (192 aa)) enclose the ABC transmembrane type-1 domain.

It belongs to the binding-protein-dependent transport system permease family. As to quaternary structure, the complex is composed of two ATP-binding proteins (UgpC), two transmembrane proteins (UgpA and UgpE) and a solute-binding protein (UgpB).

The protein localises to the cell inner membrane. In terms of biological role, part of the ABC transporter complex UgpBAEC involved in sn-glycerol-3-phosphate (G3P) import. Probably responsible for the translocation of the substrate across the membrane. This Brucella abortus (strain 2308) protein is sn-glycerol-3-phosphate transport system permease protein UgpE (ugpE).